Reading from the N-terminus, the 186-residue chain is Superoxide dismutase [Cu-Zn] (186 aa).

The N-terminal stretch at 1–22 (MNMKTLLALAVSAVCSVSVAQA) is a signal peptide. Cu cation contacts are provided by H79, H81, and H104. A disulfide bridge links C86 with C182. 4 residues coordinate Zn(2+): H104, H113, H122, and D125. H160 serves as a coordination point for Cu cation.

It belongs to the Cu-Zn superoxide dismutase family. In terms of assembly, homodimer. Cu cation is required as a cofactor. The cofactor is Zn(2+).

The protein localises to the periplasm. The enzyme catalyses 2 superoxide + 2 H(+) = H2O2 + O2. Its function is as follows. Destroys radicals which are normally produced within the cells and which are toxic to biological systems. This chain is Superoxide dismutase [Cu-Zn] (sodC), found in Neisseria meningitidis serogroup A / serotype 4A (strain DSM 15465 / Z2491).